The sequence spans 211 residues: Ribosomal RNA small subunit methyltransferase G (211 aa).

Residues Gly72, Phe77, 125–126 (IE), and Arg141 contribute to the S-adenosyl-L-methionine site.

This sequence belongs to the methyltransferase superfamily. RNA methyltransferase RsmG family.

It is found in the cytoplasm. The enzyme catalyses guanosine(527) in 16S rRNA + S-adenosyl-L-methionine = N(7)-methylguanosine(527) in 16S rRNA + S-adenosyl-L-homocysteine. Its function is as follows. Specifically methylates the N7 position of guanine in position 527 of 16S rRNA. The polypeptide is Ribosomal RNA small subunit methyltransferase G (Allorhizobium ampelinum (strain ATCC BAA-846 / DSM 112012 / S4) (Agrobacterium vitis (strain S4))).